The chain runs to 97 residues: MAKMSALSIFAIFIILVLVIFEIPEIEAHDSECLKEYGGDVGFGFCAPKIFPTICYRNCQKDKGANGGKCLWGEGGKVKCLCDFCSNESFNQFISLT.

An N-terminal signal peptide occupies residues 1–28 (MAKMSALSIFAIFIILVLVIFEIPEIEA). Disulfide bonds link C33/C85, C46/C70, C55/C80, and C59/C82.

Belongs to the DEFL family. Protease inhibitor I18 (RTI/MTI-2) subfamily.

It localises to the secreted. This Arabidopsis thaliana (Mouse-ear cress) protein is Defensin-like protein 196 (ATTI4).